A 160-amino-acid polypeptide reads, in one-letter code: Phosphatidylinositol N-acetylglucosaminyltransferase subunit gpi15 (160 aa).

2 consecutive transmembrane segments (helical) span residues 22–42 (GTQM…SLAI) and 48–68 (IIIT…ISGV).

Belongs to the PIGH family.

Its subcellular location is the endoplasmic reticulum membrane. The catalysed reaction is a 1,2-diacyl-sn-glycero-3-phospho-(1D-myo-inositol) + UDP-N-acetyl-alpha-D-glucosamine = a 6-(N-acetyl-alpha-D-glucosaminyl)-1-(1,2-diacyl-sn-glycero-3-phospho)-1D-myo-inositol + UDP + H(+). Its pathway is glycolipid biosynthesis; glycosylphosphatidylinositol-anchor biosynthesis. In terms of biological role, part of the complex catalyzing the transfer of N-acetylglucosamine from UDP-N-acetylglucosamine to phosphatidylinositol, the first step of GPI biosynthesis. The protein is Phosphatidylinositol N-acetylglucosaminyltransferase subunit gpi15 (gpi15) of Schizosaccharomyces pombe (strain 972 / ATCC 24843) (Fission yeast).